The primary structure comprises 236 residues: Protein YIPF6 (236 aa).

A2 bears the N-acetylalanine mark. At 2–84 (AEAVESPGDP…HVLYPRKSNT (83 aa)) the chain is on the cytoplasmic side. Residue S7 is modified to Phosphoserine. Residues 85-105 (LLRDWDLWGPLILCVTLALML) traverse the membrane as a helical segment. Over 106–115 (QRGSVDSEKD) the chain is Lumenal. The chain crosses the membrane as a helical span at residues 116 to 136 (GGPQFAEVFVIVWFGAVTITL). Residues 137 to 146 (NSKLLGGNIS) lie on the Cytoplasmic side of the membrane. The helical transmembrane segment at 147-167 (FFQSLCVLGYCILPLTMAMLV) threads the bilayer. Residues 168 to 184 (CRLVLLAEPGPVNFMVR) lie on the Lumenal side of the membrane. The chain crosses the membrane as a helical span at residues 185–205 (LFVVIIMFAWSIVASTAFLAD). Over 206–212 (SQPPNRK) the chain is Cytoplasmic. Residues 213–233 (ALAVYPVFLFYFVISWMILTF) form a helical membrane-spanning segment. The Lumenal segment spans residues 234 to 236 (TPQ).

Belongs to the YIP1 family. Predominantly interacts with YIPF1 or YIPF2, but may also form a ternary complex with YIPF1 and YIPF2. This interaction may stabilize YIPF1 and YIPF2.

It is found in the golgi apparatus membrane. Its function is as follows. May be required for stable YIPF1 and YIPF2 protein expression. The polypeptide is Protein YIPF6 (YIPF6) (Bos taurus (Bovine)).